A 445-amino-acid polypeptide reads, in one-letter code: N-succinylarginine dihydrolase (445 aa).

Substrate is bound by residues 19 to 28 (AGLSYGNVAS), N110, and 137 to 138 (HR). E174 is an active-site residue. A substrate-binding site is contributed by R214. H250 is a catalytic residue. 2 residues coordinate substrate: D252 and N363. C369 (nucleophile) is an active-site residue.

Belongs to the succinylarginine dihydrolase family. Homodimer.

It carries out the reaction N(2)-succinyl-L-arginine + 2 H2O + 2 H(+) = N(2)-succinyl-L-ornithine + 2 NH4(+) + CO2. Its pathway is amino-acid degradation; L-arginine degradation via AST pathway; L-glutamate and succinate from L-arginine: step 2/5. Its function is as follows. Catalyzes the hydrolysis of N(2)-succinylarginine into N(2)-succinylornithine, ammonia and CO(2). The chain is N-succinylarginine dihydrolase from Shewanella loihica (strain ATCC BAA-1088 / PV-4).